The following is a 215-amino-acid chain: Large ribosomal subunit protein uL4 (215 aa).

The segment at 46-72 (TAKSKNRAEVSGGGRKPWAQKGGGRAR) is disordered. Residues 56 to 71 (SGGGRKPWAQKGGGRA) show a composition bias toward gly residues.

It belongs to the universal ribosomal protein uL4 family. As to quaternary structure, part of the 50S ribosomal subunit.

One of the primary rRNA binding proteins, this protein initially binds near the 5'-end of the 23S rRNA. It is important during the early stages of 50S assembly. It makes multiple contacts with different domains of the 23S rRNA in the assembled 50S subunit and ribosome. In terms of biological role, forms part of the polypeptide exit tunnel. In Helicobacter pylori (strain J99 / ATCC 700824) (Campylobacter pylori J99), this protein is Large ribosomal subunit protein uL4.